We begin with the raw amino-acid sequence, 410 residues long: Transcription termination factor, mitochondrial (410 aa).

The N-terminal 44 residues, 1 to 44, are a transit peptide targeting the mitochondrion; sequence MIRSLLRSFETALKLHAGLNMHPMHCSRRLLFSQYENRASPSRL.

Belongs to the mTERF family.

The protein localises to the mitochondrion. In terms of biological role, transcription termination factor. Binds promoter DNA and regulates mitochondrial replication and transcription. Transcription termination activity may be polarized with highest termination activity occurring when its DNA-binding site is positioned in the reverse orientation with respect to the incoming RNA polymerase. Required for normal topology and maintenance of mitochondrial DNA (mtDNA) levels. Regulates mtDNA replication by promoting replication pausing, possibly by acting as a natural barrier to replication fork progression. Its function in replication pausing prevents unregulated replication that may occur for example by collisions between the machineries of DNA replication and transcription during mtDNA synthesis. This ensures the incorporation of RNA transcripts into replication intermediates at the replication fork and allow for proper fork progression. Shares mtDNA binding sites with the mitochondrial termination factor mTerf5 and thereby may antagonize mTerf5 function during replication to regulate pausing. Likely to function downstream of Dref which activates genes involved in mtDNA replication and maintenance. The polypeptide is Transcription termination factor, mitochondrial (Drosophila melanogaster (Fruit fly)).